Here is a 311-residue protein sequence, read N- to C-terminus: Progestin and adipoQ receptor family member 3 (311 aa).

The required for interaction with SREBF2 stretch occupies residues 1 to 20 (MHQKLLKSAHYIELGSYQYW). The Cytoplasmic segment spans residues 1–70 (MHQKLLKSAH…KSLFILSNET (70 aa)). The tract at residues 41-60 (KDNPYITDGYRAYLPSRLCI) is required for interaction with SCAP. The interval 61 to 71 (KSLFILSNETV) is golgi targeting. A helical membrane pass occupies residues 71–91 (VNIWSHLLGFFLFFTLGIYDM). Residues 92–104 (TSVLPSASASRED) lie on the Lumenal side of the membrane. A helical membrane pass occupies residues 105 to 125 (FVICSICLFCFQVCMLCSVGY). Over 126 to 145 (HLFSCHRSEKTCRRWMALDY) the chain is Cytoplasmic. Residues 146-166 (AGISIGILGCYVSGVFYAFYC) form a helical membrane-spanning segment. The Lumenal portion of the chain corresponds to 167–172 (NNYWRQ). A helical transmembrane segment spans residues 173 to 193 (VYLITVLAMILAVFFAQIHPS). Topologically, residues 194–203 (YLTQQWQRLR) are cytoplasmic. A helical transmembrane segment spans residues 204–224 (PIIFCSVSGYGVIPTLHWVWL). The Lumenal segment spans residues 225-235 (NGGVSAPIVQD). The helical transmembrane segment at 236 to 256 (FAPRVIVMYVIALLAFLFYIS) threads the bilayer. At 257-275 (KVPERYFPGQLNYLGSSHQ) the chain is on the cytoplasmic side. A helical membrane pass occupies residues 276–296 (IWHVLAVVMLYWWHQSTVYVM). The Lumenal portion of the chain corresponds to 297-311 (QYRHSKPCPDYVSHL). Residues 299–303 (RHSKP) are golgi targeting.

This sequence belongs to the ADIPOR family. As to quaternary structure, interacts with SCAP and SREBF2; the interactions are direct, increase in low cholesterol conditions and tether SCAP:SREBP complex to the Golgi apparatus. Interaction with SCAP is mutually exclusive with INSIG1. In hepatocytes, interacts with PPARA and HUWE1; the interactions promote PPARA poylubiquitination and HUWE1-mediated degradation. In macrophages, interacts with PPARG and STUB1; the interactions promote PPARG poylubiquitination and STUB1-mediated degradation.

The protein resides in the golgi apparatus membrane. Functionally, golgi-anchored protein which modulates its interactors acitivies by tethering them to the Golgi apparatus. Functions as a spatial regulator of RAF1 kinase by sequestrating it to the Golgi apparatus. Acts as a positive regulator of cholesterol biosynthesis by mediating the anchoring of the SCAP:SREBP complex in the Golgi apparatus, thereby promoting SCAP:SREBF2 complex formation, potentiating SREBF2 and SREBF1 processing and enhancing lipid synthesis. Also regulates PPARA and PPARG functions by mediating their interaction with E3 ubiquitin ligases, such as STUB1 or HUWE1, leading to their polyubiquitination and proteasome-mediated degradation. The polypeptide is Progestin and adipoQ receptor family member 3 (Mus musculus (Mouse)).